Consider the following 276-residue polypeptide: ADP-dependent (S)-NAD(P)H-hydrate dehydratase (276 aa).

Residues 7 to 274 enclose the YjeF C-terminal domain; that stretch reads METLNSINIP…NEIPYAMKQL (268 aa). (6S)-NADPHX contacts are provided by A42, G105, and H154. G216 is an AMP binding site. D217 is a (6S)-NADPHX binding site.

The protein belongs to the NnrD/CARKD family. As to quaternary structure, homotetramer. Mg(2+) is required as a cofactor.

It carries out the reaction (6S)-NADHX + ADP = AMP + phosphate + NADH + H(+). The catalysed reaction is (6S)-NADPHX + ADP = AMP + phosphate + NADPH + H(+). In terms of biological role, catalyzes the dehydration of the S-form of NAD(P)HX at the expense of ADP, which is converted to AMP. Together with NAD(P)HX epimerase, which catalyzes the epimerization of the S- and R-forms, the enzyme allows the repair of both epimers of NAD(P)HX, a damaged form of NAD(P)H that is a result of enzymatic or heat-dependent hydration. The protein is ADP-dependent (S)-NAD(P)H-hydrate dehydratase of Staphylococcus aureus (strain NCTC 8325 / PS 47).